Consider the following 443-residue polypeptide: Threonine/serine transporter TdcC (443 aa).

A run of 11 helical transmembrane segments spans residues 22–42 (TTWT…FFPI), 44–64 (AGFG…PIAF), 97–117 (GVVI…IYGV), 140–160 (FVAL…KDLM), 163–183 (VMSY…LSLI), 207–227 (ILVT…FSPI), 261–281 (MLMV…LSPA), 319–339 (ASII…LGTL), 366–386 (ISMI…PNIL), 389–409 (IEAM…MYAI), and 423–443 (DNVF…YKLF).

Belongs to the amino acid/polyamine transporter 2 family. SdaC/TdcC subfamily.

Its subcellular location is the cell inner membrane. It carries out the reaction L-threonine(in) + H(+)(in) = L-threonine(out) + H(+)(out). It catalyses the reaction L-serine(in) + H(+)(in) = L-serine(out) + H(+)(out). Functionally, involved in the import of threonine and serine into the cell, with the concomitant import of a proton (symport system). The sequence is that of Threonine/serine transporter TdcC from Citrobacter koseri (strain ATCC BAA-895 / CDC 4225-83 / SGSC4696).